The chain runs to 166 residues: Protein TIFY 11e (166 aa).

Residues 65–100 (ASSAAAQMTIFYGGRVLVLDECPADRAAALLRLAAS) form the Tify domain. A Jas motif is present at residues 123-148 (PVARKASLQRFMEKRKGRLAARGQPY). Positions 125–132 (ARKASLQR) match the Nuclear localization signal motif.

It belongs to the TIFY/JAZ family. Ubiquitinated. Targeted for degradation by the SCF(COI1) E3 ubiquitin ligase-proteasome pathway during jasmonate signaling.

It is found in the nucleus. In terms of biological role, repressor of jasmonate responses. This chain is Protein TIFY 11e, found in Oryza sativa subsp. japonica (Rice).